A 446-amino-acid chain; its full sequence is Methionine aminopeptidase 2-1 (446 aa).

The segment at Met1–Phe88 is disordered. Residues Glu32–Gly44 show a composition bias toward acidic residues. A compositionally biased stretch (basic residues) spans Ala57–Gly72. Residue His196 coordinates substrate. Asp216, Asp227, and His296 together coordinate a divalent metal cation. His304 is a substrate binding site. Positions 332 and 427 each coordinate a divalent metal cation.

This sequence belongs to the peptidase M24A family. Methionine aminopeptidase eukaryotic type 2 subfamily. Requires Co(2+) as cofactor. Zn(2+) serves as cofactor. It depends on Mn(2+) as a cofactor. Fe(2+) is required as a cofactor.

The protein resides in the cytoplasm. It catalyses the reaction Release of N-terminal amino acids, preferentially methionine, from peptides and arylamides.. Functionally, cotranslationally removes the N-terminal methionine from nascent proteins. The N-terminal methionine is often cleaved when the second residue in the primary sequence is small and uncharged (Met-Ala-, Cys, Gly, Pro, Ser, Thr, or Val). This Blastomyces gilchristii (strain SLH14081) (Blastomyces dermatitidis) protein is Methionine aminopeptidase 2-1.